The primary structure comprises 139 residues: Putative pre-16S rRNA nuclease (139 aa).

The protein belongs to the YqgF nuclease family.

It is found in the cytoplasm. Functionally, could be a nuclease involved in processing of the 5'-end of pre-16S rRNA. This is Putative pre-16S rRNA nuclease from Thermoanaerobacter pseudethanolicus (strain ATCC 33223 / 39E) (Clostridium thermohydrosulfuricum).